Consider the following 480-residue polypeptide: Glutamate--tRNA ligase (480 aa).

The 'HIGH' region signature appears at 21-31 (PSPTGYLHVGG). Positions 110, 112, 137, and 139 each coordinate Zn(2+). Positions 248-252 (KLSKR) match the 'KMSKS' region motif. K251 is an ATP binding site.

The protein belongs to the class-I aminoacyl-tRNA synthetase family. Glutamate--tRNA ligase type 1 subfamily. Monomer. The cofactor is Zn(2+).

It localises to the cytoplasm. It carries out the reaction tRNA(Glu) + L-glutamate + ATP = L-glutamyl-tRNA(Glu) + AMP + diphosphate. Its function is as follows. Catalyzes the attachment of glutamate to tRNA(Glu) in a two-step reaction: glutamate is first activated by ATP to form Glu-AMP and then transferred to the acceptor end of tRNA(Glu). This Haemophilus influenzae (strain 86-028NP) protein is Glutamate--tRNA ligase.